The primary structure comprises 317 residues: Glucokinase (317 aa).

Residue 6–12 (GVDIGGT) participates in ATP binding.

The protein belongs to the ROK (NagC/XylR) family. Homooligomer (possibly a homotetramer). Alternatively, it may form a heterotetramer of two glucokinase subunits with two ORF2 (AC P40182) proteins.

Its subcellular location is the cytoplasm. It carries out the reaction D-glucose + ATP = D-glucose 6-phosphate + ADP + H(+). A probable glucose kinase. Required for glucose repression of many different genes, restores glucose kinase activity in E.coli glk mutants. This chain is Glucokinase (glkA), found in Streptomyces coelicolor (strain ATCC BAA-471 / A3(2) / M145).